The chain runs to 402 residues: Metacaspase-1 (402 aa).

The interval 1 to 79 (MAYPGQGGHH…FAPPSGPIGP (79 aa)) is disordered. The segment covering 23-45 (PAPHGYAQPGYGYAPPSGPPQGY) has biased composition (low complexity). Active-site residues include His193 and Cys249.

This sequence belongs to the peptidase C14B family.

Functionally, involved in cell death (apoptosis). In Mycosarcoma maydis (Corn smut fungus), this protein is Metacaspase-1 (MCA1).